We begin with the raw amino-acid sequence, 570 residues long: Urease subunit alpha (570 aa).

The Urease domain occupies 131 to 570 (GGFDAHIHFI…LPMAQRYFLF (440 aa)). Positions 136, 138, and 219 each coordinate Ni(2+). K219 carries the post-translational modification N6-carboxylysine. H221 is a substrate binding site. H248 and H274 together coordinate Ni(2+). H322 (proton donor) is an active-site residue. D362 contacts Ni(2+).

It belongs to the metallo-dependent hydrolases superfamily. Urease alpha subunit family. In terms of assembly, heterotrimer of UreA (gamma), UreB (beta) and UreC (alpha) subunits. Three heterotrimers associate to form the active enzyme. The cofactor is Ni cation. Post-translationally, carboxylation allows a single lysine to coordinate two nickel ions.

It is found in the cytoplasm. The enzyme catalyses urea + 2 H2O + H(+) = hydrogencarbonate + 2 NH4(+). It functions in the pathway nitrogen metabolism; urea degradation; CO(2) and NH(3) from urea (urease route): step 1/1. The protein is Urease subunit alpha of Mesorhizobium japonicum (strain LMG 29417 / CECT 9101 / MAFF 303099) (Mesorhizobium loti (strain MAFF 303099)).